Consider the following 473-residue polypeptide: Probable dipeptidase (473 aa).

Cys-10 is a catalytic residue.

This sequence belongs to the peptidase C69 family.

The enzyme catalyses an L-aminoacyl-L-amino acid + H2O = 2 an L-alpha-amino acid. This chain is Probable dipeptidase, found in Latilactobacillus sakei (Lactobacillus sakei).